Here is a 1700-residue protein sequence, read N- to C-terminus: Rho guanine nucleotide exchange factor 28 (1700 aa).

Positions 288 to 343 (TEKATMPSGAAETEEEVRNLESGRSPSEEEEDAKSIKSQVDGPSEHEDQDRLPLDR) are disordered. S312 and S314 each carry phosphoserine. The segment covering 330 to 343 (PSEHEDQDRLPLDR) has biased composition (basic and acidic residues). S478 bears the Phosphoserine mark. The interval 483–532 (VADSEGEGGSEPPICYAVGSQSSPRTGLPSGDELDSFETNTEPDCNISRT) is disordered. S623 is modified (phosphoserine). The Phorbol-ester/DAG-type zinc finger occupies 651–698 (RHQFVPGTFSGVLQCSGCDKTLLGKESLQCANCKANTHKGCKDAVPPC). Residues 846–1041 (KRQDVIFELM…KDMIAAVDLK (196 aa)) form the DH domain. The PH domain maps to 1095-1184 (ATGRFKDILA…NWMRRIQQAV (90 aa)). Disordered regions lie at residues 1184 to 1205 (VESCPEEEGGRTSESDEERRKA) and 1289 to 1328 (KMGDVSQSSEESPGGTVLMDTPSTQDVPASPTASLVTEGT). Over residues 1191 to 1205 (EGGRTSESDEERRKA) the composition is skewed to basic and acidic residues. Positions 1292 to 1301 (DVSQSSEESP) are interaction with PTK2/FAK1; required for regulation of axonal branching and synapse formation. Residues 1309 to 1325 (TPSTQDVPASPTASLVT) show a composition bias toward polar residues. The interval 1369–1380 (IIQAIQNLTRLL) is mediates cytoplasmic retention and interaction with YWHAH. A coiled-coil region spans residues 1421-1522 (QEKSRYLEKQ…RERQKMRVQQ (102 aa)). An interaction with microtubules region spans residues 1421 to 1700 (QEKSRYLEKQ…DGAEENILYL (280 aa)). An RNA-binding region spans residues 1493-1524 (QLQEYQQSLERLREGQRMVERERQKMRVQQGL). At S1535 the chain carries Phosphoserine. Residues 1563–1576 (FINEAFGHMSLNTS) are mediates cytoplasmic retention and interaction with MAPK8IP1. The interval 1602-1700 (SESPTELKID…DGAEENILYL (99 aa)) is disordered. A Phosphoserine modification is found at S1604. The span at 1647-1663 (DLDSFQSESSSPQDSNQ) shows a compositional bias: low complexity. Over residues 1664–1675 (RGPQPQTLTTEA) the composition is skewed to polar residues.

Homooligomer; forms some cytoplasmic aggregates. Forms a complex with MAPK8 and MAPK8IP1. Interacts with RHOA. Interacts with microtubules. Interacts with YWHAE and YWHAH. Interacts with PTK2/FAK1. Interacts with NEFL. Interacts with CTNND2; prevents interaction with RHOA. Phosphorylated on tyrosine upon stimulation of cells by laminin. As to expression, highly enriched in the brain (at protein level). Also detected in lung and kidney.

Its subcellular location is the cytoplasm. The protein localises to the cell membrane. Functionally, functions as a RHOA-specific guanine nucleotide exchange factor regulating signaling pathways downstream of integrins and growth factor receptors. Functions in axonal branching, synapse formation and dendritic morphogenesis. Also functions in focal adhesion formation, cell motility and B-lymphocytes activation. May regulate NEFL expression and aggregation and play a role in apoptosis. The protein is Rho guanine nucleotide exchange factor 28 (Arhgef28) of Mus musculus (Mouse).